The primary structure comprises 314 residues: Ribosomal RNA large subunit methyltransferase F (314 aa).

This sequence belongs to the methyltransferase superfamily. METTL16/RlmF family.

The protein localises to the cytoplasm. It carries out the reaction adenosine(1618) in 23S rRNA + S-adenosyl-L-methionine = N(6)-methyladenosine(1618) in 23S rRNA + S-adenosyl-L-homocysteine + H(+). Functionally, specifically methylates the adenine in position 1618 of 23S rRNA. This chain is Ribosomal RNA large subunit methyltransferase F, found in Flavobacterium psychrophilum (strain ATCC 49511 / DSM 21280 / CIP 103535 / JIP02/86).